A 178-amino-acid chain; its full sequence is Fimbrial adapter PapK (178 aa).

A signal peptide spans 1–21 (MIKSTGALLLFAALSAGQAIA).

The protein resides in the secreted. Its subcellular location is the fimbrium. Adapter that links the pilus rod to the base of the tip fibrillum. Regulates the length of the tip fibrillum and joins it to the pilus rod. Pili are polar filaments radiating from the surface of the bacterium to a length of 0.5-1.5 micrometers and numbering 100-300 per cell, and enable bacteria to colonize the epithelium of specific host organs. This chain is Fimbrial adapter PapK (papK), found in Escherichia coli O6:H1 (strain CFT073 / ATCC 700928 / UPEC).